Reading from the N-terminus, the 236-residue chain is DCN1-like protein 5 (236 aa).

Residues Ser-9, Ser-40, and Ser-47 each carry the phosphoserine modification. One can recognise a DCUN1 domain in the interval 45 to 231; that stretch reads FSSKKCLAWF…LLDEFVEWHK (187 aa).

Part of a complex that contains DCUN1D5, CUL1 and RBX1; this interaction is bridged by CUL1. Interacts (via the DCUN1 domain) with the unneddylated cullins: interacts with CUL1, CUL2, CUL3, CUL4A, CUL4B and CUL5; these interactions promote the cullin neddylation and the identity of the cullin dictates the affinity of the interaction. Interacts (via DCUN1 domain) with UBE2M (N-terminally acetylated form) and probably with UBE2F (N-terminally acetylated form). May also interact with regulators or subunits of cullin-RING ligases such as RBX1, RNF7, ELOB and DDB1; these interactions are bridged by cullins. Interacts with CAND1; this interaction is bridged by cullins and strongly inhibits the neddylation of cullins. These CAND-cullin-DCNL complexes can only be neddylated in the presence of a substrate adapter. Phosphorylation at Ser-40 is independent of cullin's interaction. Phosphorylated in response to both TICAM1 and MYD88 dependent Toll-like receptor (TLR) pathway activation. Phosphorylated in response to IL1B stimulation.

The protein localises to the nucleus. It is found in the cytoplasm. It localises to the cytoskeleton. Its subcellular location is the spindle. Its function is as follows. Contributes to the neddylation of all cullins by transferring NEDD8 from N-terminally acetylated NEDD8-conjugating E2s enzyme to different cullin C-terminal domain-RBX complexes which is necessary for the activation of cullin-RING E3 ubiquitin ligases (CRLs). May play a role in DNA damage response and may participate in cell proliferation and anchorage-independent cell growth. The sequence is that of DCN1-like protein 5 (DCUN1D5) from Bos taurus (Bovine).